A 363-amino-acid polypeptide reads, in one-letter code: Des-methyl DIF-1 methyltransferase A (363 aa).

Residues Gly195, Asp221, Asp250, Leu251, and Lys266 each contribute to the S-adenosyl-L-methionine site. His270 functions as the Proton acceptor in the catalytic mechanism.

It belongs to the class I-like SAM-binding methyltransferase superfamily. Cation-independent O-methyltransferase family. COMT subfamily.

It catalyses the reaction (3,5-dichloro-2,4,6-trihydroxyphenyl)hexan-1-one + S-adenosyl-L-methionine = 1-(3,5-dichloro-2,6-dihydroxy-4-methoxyphenyl)hexan-1-one + S-adenosyl-L-homocysteine + H(+). Functionally, O-methyltransferase; part of the gene cluster that mediates the biosynthesis of DIF-1 (Differentiation Inducing Factor-1), a signal molecule involved in the differentiation of pstO (prestalk-O) cells. The three-step process begins with the formation of (2,4,6-trihydroxyphenyl)-1-hexan-1-one (THPH) by the polyketide synthase StlB. THPH is then dichlorinated by the flavin-dependent halogenase ChlA. The last step of DIF-1 biosynthesis is the O-methylation of dichloro-THPH (or des-methyl-DIF-1) by the methyltransferase DmtA to yield DIF-1. The protein is Des-methyl DIF-1 methyltransferase A of Dictyostelium discoideum (Social amoeba).